The chain runs to 408 residues: Arginine biosynthesis bifunctional protein ArgJ (408 aa).

The substrate site is built by T162, K188, T199, E280, N403, and S408. Catalysis depends on T199, which acts as the Nucleophile.

The protein belongs to the ArgJ family. In terms of assembly, heterotetramer of two alpha and two beta chains.

Its subcellular location is the cytoplasm. It catalyses the reaction N(2)-acetyl-L-ornithine + L-glutamate = N-acetyl-L-glutamate + L-ornithine. The enzyme catalyses L-glutamate + acetyl-CoA = N-acetyl-L-glutamate + CoA + H(+). Its pathway is amino-acid biosynthesis; L-arginine biosynthesis; L-ornithine and N-acetyl-L-glutamate from L-glutamate and N(2)-acetyl-L-ornithine (cyclic): step 1/1. It participates in amino-acid biosynthesis; L-arginine biosynthesis; N(2)-acetyl-L-ornithine from L-glutamate: step 1/4. Functionally, catalyzes two activities which are involved in the cyclic version of arginine biosynthesis: the synthesis of N-acetylglutamate from glutamate and acetyl-CoA as the acetyl donor, and of ornithine by transacetylation between N(2)-acetylornithine and glutamate. The polypeptide is Arginine biosynthesis bifunctional protein ArgJ (Ruegeria pomeroyi (strain ATCC 700808 / DSM 15171 / DSS-3) (Silicibacter pomeroyi)).